Here is a 226-residue protein sequence, read N- to C-terminus: Ribonuclease 3 (226 aa).

An RNase III domain is found at 6–128 (VNQLQKKLGY…LIGAIFLDSD (123 aa)). Glu41 serves as a coordination point for Mg(2+). Asp45 is a catalytic residue. Positions 114 and 117 each coordinate Mg(2+). Glu117 is an active-site residue. Residues 155 to 225 (DPKTRLQEYL…AEQALIQLEL (71 aa)) form the DRBM domain.

Belongs to the ribonuclease III family. In terms of assembly, homodimer. It depends on Mg(2+) as a cofactor.

The protein localises to the cytoplasm. The catalysed reaction is Endonucleolytic cleavage to 5'-phosphomonoester.. In terms of biological role, digests double-stranded RNA. Involved in the processing of primary rRNA transcript to yield the immediate precursors to the large and small rRNAs (23S and 16S). Processes some mRNAs, and tRNAs when they are encoded in the rRNA operon. Processes pre-crRNA and tracrRNA of type II CRISPR loci if present in the organism. The sequence is that of Ribonuclease 3 from Proteus mirabilis (strain HI4320).